A 60-amino-acid polypeptide reads, in one-letter code: UPF0509 protein Ent638_2183 (60 aa).

It belongs to the UPF0509 family.

The sequence is that of UPF0509 protein Ent638_2183 from Enterobacter sp. (strain 638).